Reading from the N-terminus, the 100-residue chain is RxLR effector protein Avrblb2 (100 aa).

The signal sequence occupies residues 1-22 (MRSFLYGVLAFAVLARSSAVAA). The RxLR-dEER signature appears at 43–57 (RSLRIEAQEVIQSGR). The short motif at 78-82 (RPDIK) is the Calmodulin-binding motif element.

This sequence belongs to the RxLR effector family. Interacts with the host papain-like cysteine protease C14. Interacts with the host calmodulin.

It is found in the secreted. Its subcellular location is the host cell membrane. Its function is as follows. Secreted effector that acts as an elicitor of hypersensitive response (HR) specifically on plants carrying defense protein Rpi-blb2. Enhances P.infestans colonization of Nicotiana benthamiana leaves. Interacts with, and subsequently prevents secretion into the apoplast of the host papain-like cysteine protease C14, thus promoting virulence by interfering with the execution of host defenses. Associates with calmodulin at the host plasma membrane to interfere with plant defense-associated calcium signaling in hosts. This Phytophthora infestans (strain T30-4) (Potato late blight agent) protein is RxLR effector protein Avrblb2.